The following is a 308-amino-acid chain: 1,4-dihydroxy-2-naphthoate octaprenyltransferase (308 aa).

Helical transmembrane passes span 22 to 42, 47 to 67, 101 to 121, 129 to 149, 153 to 173, 186 to 206, 235 to 255, 256 to 276, and 286 to 306; these read TLPL…WANP, GLVM…SNFA, WGLI…IGIA, FAFA…TVGV, GYMG…GVGG, IILP…INNL, ILLS…AISW, TNYL…FVYC, and ILAQ…LGLL.

Belongs to the MenA family. Type 1 subfamily.

The protein localises to the cell inner membrane. The catalysed reaction is an all-trans-polyprenyl diphosphate + 1,4-dihydroxy-2-naphthoate + H(+) = a 2-demethylmenaquinol + CO2 + diphosphate. Its pathway is quinol/quinone metabolism; menaquinone biosynthesis; menaquinol from 1,4-dihydroxy-2-naphthoate: step 1/2. In terms of biological role, conversion of 1,4-dihydroxy-2-naphthoate (DHNA) to demethylmenaquinone (DMK). The chain is 1,4-dihydroxy-2-naphthoate octaprenyltransferase from Haemophilus influenzae (strain ATCC 51907 / DSM 11121 / KW20 / Rd).